Consider the following 264-residue polypeptide: Acyl-[acyl-carrier-protein]--UDP-N-acetylglucosamine O-acyltransferase (264 aa).

This sequence belongs to the transferase hexapeptide repeat family. LpxA subfamily. Homotrimer.

Its subcellular location is the cytoplasm. It catalyses the reaction a (3R)-hydroxyacyl-[ACP] + UDP-N-acetyl-alpha-D-glucosamine = a UDP-3-O-[(3R)-3-hydroxyacyl]-N-acetyl-alpha-D-glucosamine + holo-[ACP]. It participates in glycolipid biosynthesis; lipid IV(A) biosynthesis; lipid IV(A) from (3R)-3-hydroxytetradecanoyl-[acyl-carrier-protein] and UDP-N-acetyl-alpha-D-glucosamine: step 1/6. Its function is as follows. Involved in the biosynthesis of lipid A, a phosphorylated glycolipid that anchors the lipopolysaccharide to the outer membrane of the cell. This chain is Acyl-[acyl-carrier-protein]--UDP-N-acetylglucosamine O-acyltransferase, found in Chlorobaculum tepidum (strain ATCC 49652 / DSM 12025 / NBRC 103806 / TLS) (Chlorobium tepidum).